The chain runs to 394 residues: Growth-regulating factor 4 (394 aa).

In terms of domain architecture, QLQ spans 64–99 (PFTAAQYEELEQQALIYKYLVAGVPVPPDLVLPIRR). The WRC domain occupies 125–169 (DPEPGRCRRTDGKKWRCSKEAAPDSKYCERHMHRGRNRSRKPVET). 2 consecutive short sequence motifs (bipartite nuclear localization signal) follow at residues 130–140 (RCRRTDGKKWR) and 158–165 (RGRNRSRK). The interval 156-180 (MHRGRNRSRKPVETQLVAQSQPPSS) is disordered. Over residues 170 to 180 (QLVAQSQPPSS) the composition is skewed to low complexity.

Belongs to the GRF family. In terms of assembly, interacts with GIF1. Interacts with GSK2. Expressed in stems. Expressed in panicles.

It localises to the nucleus. Transactivation activity is repressed by GSK2. Its function is as follows. Transcription activator that plays a role in the regulation of meristematic function in leaves, stems and inflorescences. Transcription activator that plays a regulatory role in grain development. Positively regulates grain size by promoting cell division and expansion, leading to increased grain length and width. Positively regulates the expression of genes promoting cell proliferation. Activates the expression of expansin genes to promote cell expansion and grain size. May promote grain size by activating brassinosteroid responses. Component of a network formed by the microRNA396 (miRNA396), the GRFs and their interacting factors (GIFs) acting in the regulation of meristem function, at least partially through the control of cell proliferation. Component of the miRNA396c-GRF4-GIF1 regulatory module that plays an important role in grain size determination. This Oryza sativa subsp. japonica (Rice) protein is Growth-regulating factor 4.